A 257-amino-acid polypeptide reads, in one-letter code: Dihydroorotate dehydrogenase B (NAD(+)), electron transfer subunit (257 aa).

Residues isoleucine 2–leucine 102 enclose the FAD-binding FR-type domain. FAD contacts are provided by residues arginine 53–serine 56, isoleucine 70–arginine 72, and glycine 77–threonine 78. Cysteine 221, cysteine 226, cysteine 229, and cysteine 244 together coordinate [2Fe-2S] cluster.

Belongs to the PyrK family. In terms of assembly, heterotetramer of 2 PyrK and 2 PyrD type B subunits. [2Fe-2S] cluster is required as a cofactor. It depends on FAD as a cofactor.

Its pathway is pyrimidine metabolism; UMP biosynthesis via de novo pathway; orotate from (S)-dihydroorotate (NAD(+) route): step 1/1. Its function is as follows. Responsible for channeling the electrons from the oxidation of dihydroorotate from the FMN redox center in the PyrD type B subunit to the ultimate electron acceptor NAD(+). The protein is Dihydroorotate dehydrogenase B (NAD(+)), electron transfer subunit of Bacillus caldolyticus.